Reading from the N-terminus, the 23-residue chain is uncharacterized protein (23 aa).

The protein localises to the plastid. It is found in the chloroplast. This is an uncharacterized protein from Zea mays (Maize).